Reading from the N-terminus, the 514-residue chain is ATP synthase subunit alpha (514 aa).

170-177 (GDRQIGKT) serves as a coordination point for ATP.

It belongs to the ATPase alpha/beta chains family. In terms of assembly, F-type ATPases have 2 components, CF(1) - the catalytic core - and CF(0) - the membrane proton channel. CF(1) has five subunits: alpha(3), beta(3), gamma(1), delta(1), epsilon(1). CF(0) has three main subunits: a(1), b(2) and c(9-12). The alpha and beta chains form an alternating ring which encloses part of the gamma chain. CF(1) is attached to CF(0) by a central stalk formed by the gamma and epsilon chains, while a peripheral stalk is formed by the delta and b chains.

The protein localises to the cell inner membrane. The catalysed reaction is ATP + H2O + 4 H(+)(in) = ADP + phosphate + 5 H(+)(out). Produces ATP from ADP in the presence of a proton gradient across the membrane. The alpha chain is a regulatory subunit. This chain is ATP synthase subunit alpha, found in Marinobacter nauticus (strain ATCC 700491 / DSM 11845 / VT8) (Marinobacter aquaeolei).